Here is a 504-residue protein sequence, read N- to C-terminus: MTKSSKDICSENEGKKNGKSGFFSTSFKYVLSACIASFIFGYQVSVLNTIKNFIVVEFEWCKGEKDRLNCSNNTIQSSFLLASVFIGAVLGCGFSGYLVQFGRRLSLLIIYNFFFLVSILTSITHHFHTILFARLLSGFGIGLVTVSVPMYISEMTHKDKKGAYGVMHQLFITFGIFVAVMLGLAMGEGPKADSTEPLTSFAKLWWRLMFLFPSVISLIGILALVVFFKEETPYFLFEKGRIEESKNILKKIYETDNVDEPLNAIKEAVEQNESAKKNSLSLLSALKIPSYRYVIILGCLLSGLQQFTGINVLVSNSNELYKEFLDSHLITILSVVMTAVNFLMTFPAIYIVEKLGRKTLLLWGCVGVLVAYLPTAIANEINRNSNFVKILSIVATFVMIISFAVSYGPVLWIYLHEMFPSEIKDSAASLASLVNWVCAIIVVFPSDIIIKKSPSILFIVFSVMSILTFFFIFFFIKETKGGEIGTSPYITMEERQKHMTKSVV.

Over 1–29 the chain is Cytoplasmic; the sequence is MTKSSKDICSENEGKKNGKSGFFSTSFKY. The chain crosses the membrane as a helical span at residues 30 to 50; the sequence is VLSACIASFIFGYQVSVLNTI. Over 51 to 78 the chain is Extracellular; the sequence is KNFIVVEFEWCKGEKDRLNCSNNTIQSS. An intrachain disulfide couples C61 to C70. The helical transmembrane segment at 79–99 threads the bilayer; sequence FLLASVFIGAVLGCGFSGYLV. Topologically, residues 100–104 are cytoplasmic; that stretch reads QFGRR. The helical transmembrane segment at 105–125 threads the bilayer; that stretch reads LSLLIIYNFFFLVSILTSITH. Residues 126-129 lie on the Extracellular side of the membrane; the sequence is HFHT. Residues 130 to 150 form a helical membrane-spanning segment; sequence ILFARLLSGFGIGLVTVSVPM. Residues 151-165 lie on the Cytoplasmic side of the membrane; that stretch reads YISEMTHKDKKGAYG. The helical transmembrane segment at 166-186 threads the bilayer; it reads VMHQLFITFGIFVAVMLGLAM. Q169 contacts alpha-D-glucose. Q169 is a binding site for beta-D-glucose. The Extracellular portion of the chain corresponds to 187–207; that stretch reads GEGPKADSTEPLTSFAKLWWR. The helical transmembrane segment at 208 to 228 threads the bilayer; it reads LMFLFPSVISLIGILALVVFF. At 229–293 the chain is on the cytoplasmic side; the sequence is KEETPYFLFE…SALKIPSYRY (65 aa). Residues 294–314 form a helical membrane-spanning segment; it reads VIILGCLLSGLQQFTGINVLV. Q305, Q306, and N311 together coordinate alpha-D-glucose. Q305 lines the beta-D-glucose pocket. Residue N311 coordinates beta-D-glucose. The Extracellular portion of the chain corresponds to 315–331; sequence SNSNELYKEFLDSHLIT. Residues 332 to 352 traverse the membrane as a helical segment; sequence ILSVVMTAVNFLMTFPAIYIV. Beta-D-glucose is bound at residue N341. The Cytoplasmic portion of the chain corresponds to 353 to 358; the sequence is EKLGRK. A helical membrane pass occupies residues 359–379; the sequence is TLLLWGCVGVLVAYLPTAIAN. The Extracellular segment spans residues 380-392; it reads EINRNSNFVKILS. The chain crosses the membrane as a helical span at residues 393–413; sequence IVATFVMIISFAVSYGPVLWI. Residue W412 coordinates alpha-D-glucose. Residues 414–429 are Cytoplasmic-facing; that stretch reads YLHEMFPSEIKDSAAS. Residues 430–450 traverse the membrane as a helical segment; the sequence is LASLVNWVCAIIVVFPSDIII. The Extracellular portion of the chain corresponds to 451–455; the sequence is KKSPS. A helical transmembrane segment spans residues 456–476; that stretch reads ILFIVFSVMSILTFFFIFFFI. At 477 to 504 the chain is on the cytoplasmic side; sequence KETKGGEIGTSPYITMEERQKHMTKSVV.

Belongs to the major facilitator superfamily. Sugar transporter (TC 2.A.1.1) family. Homodimer.

The protein localises to the cell membrane. The catalysed reaction is D-glucose(out) = D-glucose(in). It carries out the reaction D-fructose(out) = D-fructose(in). The enzyme catalyses D-galactose(in) = D-galactose(out). It catalyses the reaction D-mannose(out) = D-mannose(in). The catalysed reaction is D-glucosamine(out) = D-glucosamine(in). It carries out the reaction D-xylose(out) = D-xylose(in). Its activity is regulated as follows. Inhibited by cytochalasin B. Inhibited by compound 3361 (3-O-((undec-10-en)-1-yl)-D-glucose). Inhibited by compound HTI-1. Sodium-independent facilitative hexose transporter. Can transport D-glucose and D-fructose. Can transport D-mannose, D-galactose, D-xylose and D-glucosamine. The protein is Hexose transporter 1 of Plasmodium falciparum (isolate 3D7).